The chain runs to 62 residues: Large ribosomal subunit protein uL30 (62 aa).

It belongs to the universal ribosomal protein uL30 family. As to quaternary structure, part of the 50S ribosomal subunit.

The chain is Large ribosomal subunit protein uL30 from Halalkalibacterium halodurans (strain ATCC BAA-125 / DSM 18197 / FERM 7344 / JCM 9153 / C-125) (Bacillus halodurans).